The chain runs to 247 residues: MDYQTFEKVNKFINVEAYIFFLTQELKQQYKLSLKELLILAYFYYKNEHSISLKEIIGDILYKQSDVVKNIKSLSKKGFINKSRNEADERRIFVSVTPIQRKKIACVINELDKIIKGFNKERDYIKYQWAPKYSKEFFILFMNIMYSKDFLKYRFNLTFLDLSILYVISSRKNEILNLKDLFESIRFMYPQIVRSVNRLNNKGMLIKERSLADERIVLIKINKIQYNTIKSIFTDTSKILKPRKFFF.

2 DNA-binding regions (H-T-H motif) span residues 53 to 76 (LKEI…SLSK) and 178 to 201 (LKDL…RLNN).

This sequence belongs to the SarA family.

The protein localises to the cytoplasm. Positive regulator of RNAII and RNAIII in a cell density-dependent manner. It can contribute to the expression of virulence genes controlled by agr. May also regulate target genes via an agr-independent pathway. The chain is HTH-type transcriptional regulator SarU (sarU) from Staphylococcus aureus (strain NCTC 8325 / PS 47).